The primary structure comprises 490 residues: Sphingomyelinase (490 aa).

The N-terminal stretch at 1–31 (MDYAKRIGQVGALAVVLGVGAAVTTHAIGSA) is a signal peptide. A disordered region spans residues 30-49 (SAAPTDPSSSSTDSPVDACS). Residues 32–136 (APTDPSSSST…FDACDPDGNR (105 aa)) are Periplasmic-facing. A beta stranded transmembrane segment spans residues 137–145 (MTFAVRERG). Topologically, residues 146-161 (APGGPQHGIVTVDQRT) are extracellular. Residues 162–168 (ASFIYTA) form a beta stranded membrane-spanning segment. The Periplasmic segment spans residues 169-171 (DPG). Residues 172-182 (FVGTDTFSVNV) traverse the membrane as a beta stranded segment. Residues 183-187 (SDDTS) lie on the Extracellular side of the membrane. The chain crosses the membrane as a beta stranded span at residues 188 to 196 (LHVHGLAGY). At 197–204 (LGPFHGHD) the chain is on the periplasmic side. A beta stranded membrane pass occupies residues 205-213 (DVATVTVFV). The Extracellular portion of the chain corresponds to 214–490 (GNTPTDTISG…HYVADNVAVR (277 aa)).

The protein belongs to the SpmT family.

The protein localises to the cell outer membrane. It catalyses the reaction a sphingomyelin + H2O = phosphocholine + an N-acylsphing-4-enine + H(+). Functionally, catalyzes the cleavage of sphingomyelin, a major lipid in eukaryotic cells, into ceramide and phosphocholine, which are then utilized by M.bovis as carbon, nitrogen and phosphorus sources, respectively. Thus, enables M.bovis to utilize sphingomyelin as a source of several essential nutrients for intracellular growth during infection. Furthermore, lyses erythrocytes and constitutes a hemolytic factor. This chain is Sphingomyelinase, found in Mycobacterium bovis (strain ATCC BAA-935 / AF2122/97).